The sequence spans 84 residues: NAD(P)H-quinone oxidoreductase subunit O (84 aa).

Belongs to the complex I NdhO subunit family. In terms of assembly, NDH-1 can be composed of about 15 different subunits; different subcomplexes with different compositions have been identified which probably have different functions.

It localises to the cellular thylakoid membrane. It catalyses the reaction a plastoquinone + NADH + (n+1) H(+)(in) = a plastoquinol + NAD(+) + n H(+)(out). It carries out the reaction a plastoquinone + NADPH + (n+1) H(+)(in) = a plastoquinol + NADP(+) + n H(+)(out). Functionally, NDH-1 shuttles electrons from an unknown electron donor, via FMN and iron-sulfur (Fe-S) centers, to quinones in the respiratory and/or the photosynthetic chain. The immediate electron acceptor for the enzyme in this species is believed to be plastoquinone. Couples the redox reaction to proton translocation, and thus conserves the redox energy in a proton gradient. Cyanobacterial NDH-1 also plays a role in inorganic carbon-concentration. The polypeptide is NAD(P)H-quinone oxidoreductase subunit O (Synechococcus sp. (strain CC9902)).